Reading from the N-terminus, the 219-residue chain is Cytidylate kinase (219 aa).

An ATP-binding site is contributed by 21-29 (GPAASGKGT).

Belongs to the cytidylate kinase family. Type 1 subfamily.

The protein resides in the cytoplasm. The enzyme catalyses CMP + ATP = CDP + ADP. It carries out the reaction dCMP + ATP = dCDP + ADP. The protein is Cytidylate kinase of Rickettsia africae (strain ESF-5).